The following is a 389-amino-acid chain: Methane monooxygenase component A beta chain (389 aa).

In terms of assembly, m.capsulatus has two forms of methane monooxygenase, a soluble and a membrane-bound type. The soluble type consists of four components (A to D): protein A, comprising three chains, in an alpha-2, beta-2, gamma-2 configuration, is a nonheme iron protein containing an unusual mu-hydroxo bridge structure at its active site and interacts with both oxygen and methane.

It catalyses the reaction methane + NADH + O2 + H(+) = methanol + NAD(+) + H2O. The enzyme catalyses methane + NADPH + O2 + H(+) = methanol + NADP(+) + H2O. Functionally, responsible for the initial oxygenation of methane to methanol in methanotrophs. It also catalyzes the monohydroxylation of a variety of unactivated alkenes, alicyclic, aromatic and heterocyclic compounds. This chain is Methane monooxygenase component A beta chain (mmoY), found in Methylococcus capsulatus (strain ATCC 33009 / NCIMB 11132 / Bath).